The following is a 380-amino-acid chain: Cytochrome b (380 aa).

Helical transmembrane passes span phenylalanine 34–methionine 54, tryptophan 78–isoleucine 99, tryptophan 114–leucine 134, and phenylalanine 179–leucine 199. 2 residues coordinate heme b: histidine 84 and histidine 98. Residues histidine 183 and histidine 197 each coordinate heme b. Histidine 202 is an a ubiquinone binding site. A run of 4 helical transmembrane segments spans residues tyrosine 227–serine 247, leucine 289–histidine 309, methionine 321–glycine 341, and phenylalanine 348–proline 368.

It belongs to the cytochrome b family. As to quaternary structure, the cytochrome bc1 complex contains 3 respiratory subunits (MT-CYB, CYC1 and UQCRFS1), 2 core proteins (UQCRC1 and UQCRC2) and probably 6 low-molecular weight proteins. It depends on heme b as a cofactor.

Its subcellular location is the mitochondrion inner membrane. Functionally, component of the ubiquinol-cytochrome c reductase complex (complex III or cytochrome b-c1 complex) that is part of the mitochondrial respiratory chain. The b-c1 complex mediates electron transfer from ubiquinol to cytochrome c. Contributes to the generation of a proton gradient across the mitochondrial membrane that is then used for ATP synthesis. The polypeptide is Cytochrome b (mt-cyb) (Ranodon sibiricus (Siberian salamander)).